The sequence spans 200 residues: ATP-dependent Clp protease proteolytic subunit (200 aa).

Ser102 (nucleophile) is an active-site residue. His127 is a catalytic residue.

The protein belongs to the peptidase S14 family. In terms of assembly, fourteen ClpP subunits assemble into 2 heptameric rings which stack back to back to give a disk-like structure with a central cavity, resembling the structure of eukaryotic proteasomes.

The protein resides in the cytoplasm. It catalyses the reaction Hydrolysis of proteins to small peptides in the presence of ATP and magnesium. alpha-casein is the usual test substrate. In the absence of ATP, only oligopeptides shorter than five residues are hydrolyzed (such as succinyl-Leu-Tyr-|-NHMec, and Leu-Tyr-Leu-|-Tyr-Trp, in which cleavage of the -Tyr-|-Leu- and -Tyr-|-Trp bonds also occurs).. Its function is as follows. Cleaves peptides in various proteins in a process that requires ATP hydrolysis. Has a chymotrypsin-like activity. Plays a major role in the degradation of misfolded proteins. The polypeptide is ATP-dependent Clp protease proteolytic subunit (Dehalococcoides mccartyi (strain ATCC BAA-2266 / KCTC 15142 / 195) (Dehalococcoides ethenogenes (strain 195))).